We begin with the raw amino-acid sequence, 378 residues long: Ribosomal RNA large subunit methyltransferase G (378 aa).

The protein belongs to the methyltransferase superfamily. RlmG family.

The protein resides in the cytoplasm. It carries out the reaction guanosine(1835) in 23S rRNA + S-adenosyl-L-methionine = N(2)-methylguanosine(1835) in 23S rRNA + S-adenosyl-L-homocysteine + H(+). Its function is as follows. Specifically methylates the guanine in position 1835 (m2G1835) of 23S rRNA. The polypeptide is Ribosomal RNA large subunit methyltransferase G (Salmonella heidelberg (strain SL476)).